Consider the following 475-residue polypeptide: Ribulose bisphosphate carboxylase large chain (475 aa).

Residues 1–2 constitute a propeptide that is removed on maturation; it reads MS. An N-acetylproline modification is found at Pro-3. Lys-14 is modified (N6,N6,N6-trimethyllysine). The substrate site is built by Asn-123 and Thr-173. The Proton acceptor role is filled by Lys-175. Lys-177 serves as a coordination point for substrate. Mg(2+) contacts are provided by Lys-201, Asp-203, and Glu-204. At Lys-201 the chain carries N6-carboxylysine. The active-site Proton acceptor is His-294. Substrate-binding residues include Arg-295, His-327, and Ser-379.

This sequence belongs to the RuBisCO large chain family. Type I subfamily. In terms of assembly, heterohexadecamer of 8 large chains and 8 small chains; disulfide-linked. The disulfide link is formed within the large subunit homodimers. Requires Mg(2+) as cofactor. In terms of processing, the disulfide bond which can form in the large chain dimeric partners within the hexadecamer appears to be associated with oxidative stress and protein turnover.

The protein localises to the plastid. The protein resides in the chloroplast. The enzyme catalyses 2 (2R)-3-phosphoglycerate + 2 H(+) = D-ribulose 1,5-bisphosphate + CO2 + H2O. It carries out the reaction D-ribulose 1,5-bisphosphate + O2 = 2-phosphoglycolate + (2R)-3-phosphoglycerate + 2 H(+). Functionally, ruBisCO catalyzes two reactions: the carboxylation of D-ribulose 1,5-bisphosphate, the primary event in carbon dioxide fixation, as well as the oxidative fragmentation of the pentose substrate in the photorespiration process. Both reactions occur simultaneously and in competition at the same active site. This chain is Ribulose bisphosphate carboxylase large chain, found in Chloranthus spicatus (Chulantree).